Consider the following 754-residue polypeptide: Ribonucleoside-diphosphate reductase subunit alpha (754 aa).

The region spanning 4–93 (INVIKSSGVS…MFALRKHVYG (90 aa)) is the ATP-cone domain. Residues Thr-206, 221–222 (SC), Gly-250, 435–439 (NLCCE), and 615–619 (PCESS) contribute to the substrate site. Cys-222 and Cys-457 are oxidised to a cystine. The Proton acceptor role is filled by Asn-435. The active-site Cysteine radical intermediate is the Cys-437. Glu-439 serves as the catalytic Proton acceptor. The interval 621–641 (QVSNSTNGYEPPRGPVSVKES) is disordered.

The protein belongs to the ribonucleoside diphosphate reductase large chain family. In terms of assembly, heterodimer of a large and a small subunit.

It catalyses the reaction a 2'-deoxyribonucleoside 5'-diphosphate + [thioredoxin]-disulfide + H2O = a ribonucleoside 5'-diphosphate + [thioredoxin]-dithiol. With respect to regulation, under complex allosteric control mediated by deoxynucleoside triphosphates and ATP binding. The type of nucleotide bound at the specificity site determines substrate preference. It seems probable that ATP makes the enzyme reduce CDP and UDP, dGTP favors ADP reduction and dTTP favors GDP reduction. In terms of biological role, provides the precursors necessary for DNA synthesis. Catalyzes the biosynthesis of deoxyribonucleotides from the corresponding ribonucleotides. In Escherichia coli (Bacteriophage T4), this protein is Ribonucleoside-diphosphate reductase subunit alpha (NRDA).